The sequence spans 64 residues: Conotoxin LiC121 (64 aa).

The N-terminal stretch at 1–22 is a signal peptide; sequence MRCVPVFIILLLLSPSAPSVDA. Residues 23–48 constitute a propeptide that is removed on maturation; that stretch reads HPKTKDDVPLASFHDDAKRTLQRLWI.

This sequence belongs to the conotoxin T superfamily. Contains 2 disulfide bonds that can be either 'C1-C3, C2-C4' or 'C1-C4, C2-C3', since these disulfide connectivities have been observed for conotoxins with cysteine framework V (for examples, see AC P0DQQ7 and AC P81755). Expressed by the venom duct.

It localises to the secreted. In Conus lividus (Livid cone), this protein is Conotoxin LiC121.